Here is a 635-residue protein sequence, read N- to C-terminus: Threonine--tRNA ligase (635 aa).

The 61-residue stretch at 1–61 folds into the TGS domain; sequence MIQITLPDSS…SQDSALSIVT (61 aa). The interval 242 to 533 is catalytic; it reads DHRKLGKELD…LIEEHAGALP (292 aa). Zn(2+)-binding residues include C333, H384, and H510.

This sequence belongs to the class-II aminoacyl-tRNA synthetase family. As to quaternary structure, homodimer. Requires Zn(2+) as cofactor.

It is found in the cytoplasm. It catalyses the reaction tRNA(Thr) + L-threonine + ATP = L-threonyl-tRNA(Thr) + AMP + diphosphate + H(+). Catalyzes the attachment of threonine to tRNA(Thr) in a two-step reaction: L-threonine is first activated by ATP to form Thr-AMP and then transferred to the acceptor end of tRNA(Thr). Also edits incorrectly charged L-seryl-tRNA(Thr). This Polaromonas naphthalenivorans (strain CJ2) protein is Threonine--tRNA ligase.